A 445-amino-acid chain; its full sequence is Phosphoglucosamine mutase (445 aa).

Residue Ser-102 is the Phosphoserine intermediate of the active site. Mg(2+) contacts are provided by Ser-102, Asp-241, Asp-243, and Asp-245. Residue Ser-102 is modified to Phosphoserine.

The protein belongs to the phosphohexose mutase family. Mg(2+) serves as cofactor. Activated by phosphorylation.

It carries out the reaction alpha-D-glucosamine 1-phosphate = D-glucosamine 6-phosphate. In terms of biological role, catalyzes the conversion of glucosamine-6-phosphate to glucosamine-1-phosphate. This is Phosphoglucosamine mutase from Shewanella oneidensis (strain ATCC 700550 / JCM 31522 / CIP 106686 / LMG 19005 / NCIMB 14063 / MR-1).